The chain runs to 1296 residues: Nuclear factor related to kappa-B-binding protein (1296 aa).

One can recognise a DEUBAD domain in the interval 39-156; the sequence is PEDLLEDPEI…LKQILASRSD (118 aa). Disordered regions lie at residues 165–186 and 204–232; these read GPAL…EREW and GDTA…PAVP. Low complexity predominate over residues 216–232; it reads SSWLPSSPARSPSPAVP. A phosphoserine mark is found at Ser-228 and Ser-298. A Glycyl lysine isopeptide (Lys-Gly) (interchain with G-Cter in SUMO2) cross-link involves residue Lys-327. Phosphoserine is present on Ser-351. Residues 370 to 495 are winged-helix like domain; the sequence is LGINEISSSF…FCKENEDSSD (126 aa). Residue Lys-469 forms a Glycyl lysine isopeptide (Lys-Gly) (interchain with G-Cter in SUMO2) linkage. Lys-488 participates in a covalent cross-link: Glycyl lysine isopeptide (Lys-Gly) (interchain with G-Cter in SUMO1); alternate. Lys-488 is covalently cross-linked (Glycyl lysine isopeptide (Lys-Gly) (interchain with G-Cter in SUMO2); alternate). 2 disordered regions span residues 663-758 and 1015-1036; these read QAQA…SSGV and HAAD…PAGT. Over residues 700–713 the composition is skewed to low complexity; that stretch reads PSEQSQMSLSDSSM. A compositionally biased stretch (pro residues) spans 726 to 737; it reads PALPTPISPPPV. The segment covering 741-758 has biased composition (polar residues); the sequence is NRSGSSTVSEPAQSSSGV. Positions 1016 to 1034 are enriched in low complexity; that stretch reads AADSPAKAPSASVPSSAPA. At Ser-1019 the chain carries Phosphoserine. Residue Lys-1234 is modified to N6-acetyllysine. The residue at position 1288 (Ser-1288) is a Phosphoserine.

Belongs to the NFRKB family. Component of the chromatin remodeling INO80 complex; specifically part of a complex module associated with the N-terminus of INO80. Interacts with UCHL5.

Its subcellular location is the nucleus. Its function is as follows. Binds to the DNA consensus sequence 5'-GGGGAATCTCC-3'. Putative regulatory component of the chromatin remodeling INO80 complex which is involved in transcriptional regulation, DNA replication and probably DNA repair. Modulates the deubiquitinase activity of UCHL5 in the INO80 complex. The chain is Nuclear factor related to kappa-B-binding protein (Nfrkb) from Mus musculus (Mouse).